A 1064-amino-acid polypeptide reads, in one-letter code: Valine--tRNA ligase, mitochondrial (1064 aa).

A mitochondrion-targeting transit peptide spans 1–26 (MPHLPLASFRPPFWGLRHSRGLPRFH). Residues 25-65 (FHSVSTQSEPHGSPISRRNREAKQKRLREKQATLETDIAGE) form a disordered region. Over residues 42–56 (RNREAKQKRLREKQA) the composition is skewed to basic and acidic residues. A 'HIGH' region motif is present at residues 146–156 (PNVTGSLHIGH). The 'KMSKS' region motif lies at 659–663 (KMSKS). K662 serves as a coordination point for ATP.

It belongs to the class-I aminoacyl-tRNA synthetase family.

It localises to the mitochondrion. It carries out the reaction tRNA(Val) + L-valine + ATP = L-valyl-tRNA(Val) + AMP + diphosphate. In terms of biological role, catalyzes the attachment of valine to tRNA(Val) in a two-step reaction: valine is first activated by ATP to form Val-AMP and then transferred to the acceptor end of tRNA(Val). The polypeptide is Valine--tRNA ligase, mitochondrial (VARS2) (Macaca mulatta (Rhesus macaque)).